The following is a 157-amino-acid chain: Endoribonuclease YbeY (157 aa).

Positions 122, 126, and 132 each coordinate Zn(2+).

The protein belongs to the endoribonuclease YbeY family. Zn(2+) is required as a cofactor.

Its subcellular location is the cytoplasm. Its function is as follows. Single strand-specific metallo-endoribonuclease involved in late-stage 70S ribosome quality control and in maturation of the 3' terminus of the 16S rRNA. The chain is Endoribonuclease YbeY from Bacillus velezensis (strain DSM 23117 / BGSC 10A6 / LMG 26770 / FZB42) (Bacillus amyloliquefaciens subsp. plantarum).